Reading from the N-terminus, the 474-residue chain is Lysosomal protective protein (474 aa).

The N-terminal stretch at 1–23 (MPGTALSPLLLLLLLSWASRNEA) is a signal peptide. 4 disulfide bridges follow: Cys83–Cys356, Cys235–Cys251, Cys236–Cys241, and Cys276–Cys325. An N-linked (GlcNAc...) (high mannose) asparagine glycan is attached at Asn140. Residue Ser173 is part of the active site. Asn327 is a glycosylation site (N-linked (GlcNAc...) (high mannose) asparagine). Catalysis depends on residues Asp394 and His451.

It belongs to the peptidase S10 family. Heterodimer of a 32 kDa chain and a 20 kDa chain; disulfide-linked.

Its subcellular location is the lysosome. It catalyses the reaction Release of a C-terminal amino acid with broad specificity.. Protective protein appears to be essential for both the activity of beta-galactosidase and neuraminidase, it associates with these enzymes and exerts a protective function necessary for their stability and activity. This protein is also a carboxypeptidase and can deamidate tachykinins. The polypeptide is Lysosomal protective protein (Ctsa) (Mus musculus (Mouse)).